Reading from the N-terminus, the 1346-residue chain is Cytokinesis protein sepH (1346 aa).

The interval 1 to 50 (MVSRSNEGPEAPHPASRTPGAPAKGRLTRLGSSPSKRDDKAKDDRMGKTS) is disordered. The span at 35 to 50 (SKRDDKAKDDRMGKTS) shows a compositional bias: basic and acidic residues. The Protein kinase domain maps to 60–310 (YQLGDCLGRG…ARKLLKHPWI (251 aa)). ATP contacts are provided by residues 66 to 74 (LGRGAFGSV) and lysine 89. Aspartate 182 (proton acceptor) is an active-site residue. 3 disordered regions span residues 342–380 (RSPE…PSPV), 446–497 (DESF…HMRR), and 1211–1295 (LCKL…AGAS). 2 stretches are compositionally biased toward polar residues: residues 477 to 489 (QQAN…SQNG) and 1220 to 1249 (RGST…NQSK).

Belongs to the protein kinase superfamily. Ser/Thr protein kinase family. CDC7 subfamily. Mg(2+) serves as cofactor.

It catalyses the reaction L-seryl-[protein] + ATP = O-phospho-L-seryl-[protein] + ADP + H(+). The catalysed reaction is L-threonyl-[protein] + ATP = O-phospho-L-threonyl-[protein] + ADP + H(+). In terms of biological role, required for early events during cytokinesis including localization of cytoskeletal components to the cytokinetic ring. In Emericella nidulans (strain FGSC A4 / ATCC 38163 / CBS 112.46 / NRRL 194 / M139) (Aspergillus nidulans), this protein is Cytokinesis protein sepH.